Consider the following 263-residue polypeptide: Endonuclease 8 (263 aa).

Catalysis depends on proline 2, which acts as the Schiff-base intermediate with DNA. Glutamate 3 (proton donor) is an active-site residue. The Proton donor; for beta-elimination activity role is filled by lysine 53. DNA-binding residues include glutamine 70, arginine 125, and asparagine 169. Residues lysine 229–lysine 263 form an FPG-type zinc finger. The Proton donor; for delta-elimination activity role is filled by arginine 253.

This sequence belongs to the FPG family. Requires Zn(2+) as cofactor.

It carries out the reaction 2'-deoxyribonucleotide-(2'-deoxyribose 5'-phosphate)-2'-deoxyribonucleotide-DNA = a 3'-end 2'-deoxyribonucleotide-(2,3-dehydro-2,3-deoxyribose 5'-phosphate)-DNA + a 5'-end 5'-phospho-2'-deoxyribonucleoside-DNA + H(+). Functionally, involved in base excision repair of DNA damaged by oxidation or by mutagenic agents. Acts as a DNA glycosylase that recognizes and removes damaged bases. Has a preference for oxidized pyrimidines, such as thymine glycol, 5,6-dihydrouracil and 5,6-dihydrothymine. Has AP (apurinic/apyrimidinic) lyase activity and introduces nicks in the DNA strand. Cleaves the DNA backbone by beta-delta elimination to generate a single-strand break at the site of the removed base with both 3'- and 5'-phosphates. The chain is Endonuclease 8 from Salmonella enteritidis PT4 (strain P125109).